The sequence spans 421 residues: Meiotic fizzy-related protein 1 (421 aa).

A disordered region spans residues 79-107; the sequence is DTPDRKSYSLSPISPQSQDMLRQPQKPKR. Over residues 86 to 98 the composition is skewed to polar residues; that stretch reads YSLSPISPQSQDM. 7 WD repeats span residues 123-160, 164-203, 206-246, 247-286, 289-331, 333-374, and 377-416; these read KNDFYLNLLDWGQSNVLAVGLASSIYLWSAASGKVVQL, GATNHVTSVLWTGKGTQLAVGTDSGVIYIWDIESTKSVRS, GHSE…EMMK, VHEQEICGLQWDRSLGQLASGGNDNNLFVWDYRSSRPLHK, EHTA…LQNK, DTGS…NIAN, and AHTNRVLYLSMSPDGQSIVTGAGDETLRFWKLFNKKPKEE.

The protein belongs to the WD repeat CDC20/Fizzy family. As to quaternary structure, interacts with mes1.

It localises to the nucleus. In terms of biological role, meiosis-specific activator of the anaphase promoting complex/cyclosome (APC/C). Involved in cdc13 degradation. This chain is Meiotic fizzy-related protein 1 (mfr1), found in Schizosaccharomyces pombe (strain 972 / ATCC 24843) (Fission yeast).